The following is a 59-amino-acid chain: Preprotein translocase subunit SecG (59 aa).

At 1–33 the chain is on the cytoplasmic side; that stretch reads MARRESSGGSGGLMSSAGLMRYFEAEESAIKID. Residues 34 to 55 form a helical membrane-spanning segment; that stretch reads PKTVIIAAVASGAFIWILNFTY. Topologically, residues 56 to 59 are extracellular; that stretch reads GRFW.

This sequence belongs to the SEC61-beta family. In terms of assembly, component of the protein translocase complex. Heterotrimer consisting of alpha (SecY), beta (SecG) and gamma (SecE) subunits. Can form oligomers of the heterotrimer.

Its subcellular location is the cell membrane. Involved in protein export. The function of the beta subunit is unknown, but it may be involved in stabilization of the trimeric complex. The polypeptide is Preprotein translocase subunit SecG (Methanocella arvoryzae (strain DSM 22066 / NBRC 105507 / MRE50)).